The primary structure comprises 32 residues: U13-ctenitoxin-Pn1a (32 aa).

Disulfide bonds link Cys-3-Cys-17, Cys-10-Cys-21, and Cys-16-Cys-30.

In terms of tissue distribution, expressed by the venom gland.

The protein localises to the secreted. Its function is as follows. Acts as a neurotoxin. This chain is U13-ctenitoxin-Pn1a, found in Phoneutria nigriventer (Brazilian armed spider).